Here is a 104-residue protein sequence, read N- to C-terminus: Protein MGF 110-2L (104 aa).

A signal peptide spans 1-19; it reads MRFFSYLGLLLAGLASLQG.

It belongs to the asfivirus MGF 110 family.

Plays a role in virus cell tropism, and may be required for efficient virus replication in macrophages. This is Protein MGF 110-2L from African swine fever virus (isolate Tick/South Africa/Pretoriuskop Pr4/1996) (ASFV).